The sequence spans 191 residues: Fe/S biogenesis protein NfuA (191 aa).

[4Fe-4S] cluster contacts are provided by cysteine 149 and cysteine 152.

It belongs to the NfuA family. Homodimer. [4Fe-4S] cluster serves as cofactor.

In terms of biological role, involved in iron-sulfur cluster biogenesis. Binds a 4Fe-4S cluster, can transfer this cluster to apoproteins, and thereby intervenes in the maturation of Fe/S proteins. Could also act as a scaffold/chaperone for damaged Fe/S proteins. This is Fe/S biogenesis protein NfuA from Enterobacter sp. (strain 638).